The primary structure comprises 366 residues: tRNA/tmRNA (uracil-C(5))-methyltransferase (366 aa).

Residues Q190, Y218, N223, E239, and D299 each contribute to the S-adenosyl-L-methionine site. Catalysis depends on C324, which acts as the Nucleophile. The active-site Proton acceptor is E358.

The protein belongs to the class I-like SAM-binding methyltransferase superfamily. RNA M5U methyltransferase family. TrmA subfamily.

It catalyses the reaction uridine(54) in tRNA + S-adenosyl-L-methionine = 5-methyluridine(54) in tRNA + S-adenosyl-L-homocysteine + H(+). The enzyme catalyses uridine(341) in tmRNA + S-adenosyl-L-methionine = 5-methyluridine(341) in tmRNA + S-adenosyl-L-homocysteine + H(+). Dual-specificity methyltransferase that catalyzes the formation of 5-methyluridine at position 54 (m5U54) in all tRNAs, and that of position 341 (m5U341) in tmRNA (transfer-mRNA). The protein is tRNA/tmRNA (uracil-C(5))-methyltransferase of Salmonella newport (strain SL254).